A 446-amino-acid polypeptide reads, in one-letter code: MLDMSEARSQPPCSPSGTASSMSHVEDSDSDAPPSPAGSEGLGRAGVAVGGARGDPAEAADERFPACIRDAVSQVLKGYDWSLVPMPVRGGGGGALKAKPHVKRPMNAFMVWAQAARRKLADQYPHLHNAELSKTLGKLWRLLSESEKRPFVEEAERLRVQHKKDHPDYKYQPRRRKSAKAGHSDSDSGAELGPHPGGGAVYKAEAGLGDGHHHGDHTGQTHGPPTPPTTPKTELQQAGAKPELKLEGRRPVDSGRQNIDFSNVDISELSSEVMGTMDAFDVHEFDQYLPLGGPAPPEPGQAYGGAYFHAGASPVWAHKSAPSASASPTETGPPRPHIKTEQPSPGHYGDQPRGSPDYGSCSGQSSATPAAPAGPFAGSQGDYGDLQASSYYGAYPGYAPGLYQYPCFHSPRRPYASPLLNGLALPPAHSPTSHWDQPVYTTLTRP.

3 disordered regions span residues 1–58 (MLDM…DPAE), 155–259 (AERL…RQNI), and 318–378 (HKSA…PFAG). The span at 40–53 (EGLGRAGVAVGGAR) shows a compositional bias: gly residues. The tract at residues 58 to 100 (EAADERFPACIRDAVSQVLKGYDWSLVPMPVRGGGGGALKAKP) is dimerization (DIM). The HMG box DNA-binding region spans 102–170 (VKRPMNAFMV…QHKKDHPDYK (69 aa)). 3 stretches are compositionally biased toward basic and acidic residues: residues 155 to 171 (AERL…DYKY), 210 to 219 (DGHHHGDHTG), and 242 to 253 (PELKLEGRRPVD). The interval 224–298 (PPTPPTTPKT…LPLGGPAPPE (75 aa)) is transactivation domain (TAM). The segment at 335-446 (RPHIKTEQPS…QPVYTTLTRP (112 aa)) is transactivation domain (TAC). Residues 362–378 (SGQSSATPAAPAGPFAG) are compositionally biased toward low complexity. The 9aaTAD signature appears at 400–408 (PGLYQYPCF). Positions 425–446 (LPPAHSPTSHWDQPVYTTLTRP) are disordered. Positions 430 to 446 (SPTSHWDQPVYTTLTRP) are enriched in polar residues.

The protein localises to the nucleus. Functionally, transcription factor that may play a role in central nervous system, limb and facial development. May be involved in male sex determination. Binds the consensus motif 5'-[AT][AT]CAA[AT]G-3'. The sequence is that of Transcription factor SOX-8 from Homo sapiens (Human).